The sequence spans 302 residues: N-acetylmuramic acid 6-phosphate etherase (302 aa).

The SIS domain maps to 55–218 (AYPKFDQGGR…STGIMVKSGK (164 aa)). Residue Glu83 is the Proton donor of the active site. The active site involves Glu114.

Belongs to the GCKR-like family. MurNAc-6-P etherase subfamily. Homodimer.

It catalyses the reaction N-acetyl-D-muramate 6-phosphate + H2O = N-acetyl-D-glucosamine 6-phosphate + (R)-lactate. Its pathway is amino-sugar metabolism; N-acetylmuramate degradation. Its function is as follows. Specifically catalyzes the cleavage of the D-lactyl ether substituent of MurNAc 6-phosphate, producing GlcNAc 6-phosphate and D-lactate. The sequence is that of N-acetylmuramic acid 6-phosphate etherase from Levilactobacillus brevis (strain ATCC 367 / BCRC 12310 / CIP 105137 / JCM 1170 / LMG 11437 / NCIMB 947 / NCTC 947) (Lactobacillus brevis).